A 53-amino-acid polypeptide reads, in one-letter code: UPF0391 membrane protein Acid_3618 (53 aa).

A run of 2 helical transmembrane segments spans residues 6–26 (LVFL…LAGA) and 28–48 (VGIA…AFLM).

Belongs to the UPF0391 family.

The protein localises to the cell membrane. This Solibacter usitatus (strain Ellin6076) protein is UPF0391 membrane protein Acid_3618.